A 157-amino-acid chain; its full sequence is Phosphopantetheine adenylyltransferase (157 aa).

A substrate-binding site is contributed by Thr10. Residues 10–11 and His18 each bind ATP; that span reads TF. Lys42, Leu74, and Arg88 together coordinate substrate. ATP is bound by residues 89–91, Glu99, and 124–130; these read GLR and NAFISSS.

Belongs to the bacterial CoaD family. As to quaternary structure, homohexamer. The cofactor is Mg(2+).

It is found in the cytoplasm. The enzyme catalyses (R)-4'-phosphopantetheine + ATP + H(+) = 3'-dephospho-CoA + diphosphate. It participates in cofactor biosynthesis; coenzyme A biosynthesis; CoA from (R)-pantothenate: step 4/5. Functionally, reversibly transfers an adenylyl group from ATP to 4'-phosphopantetheine, yielding dephospho-CoA (dPCoA) and pyrophosphate. This is Phosphopantetheine adenylyltransferase from Helicobacter pylori (strain J99 / ATCC 700824) (Campylobacter pylori J99).